The chain runs to 94 residues: UPF0235 protein Dred_0717 (94 aa).

This sequence belongs to the UPF0235 family.

The sequence is that of UPF0235 protein Dred_0717 from Desulforamulus reducens (strain ATCC BAA-1160 / DSM 100696 / MI-1) (Desulfotomaculum reducens).